We begin with the raw amino-acid sequence, 521 residues long: Protein nucleotidyltransferase YdiU (521 aa).

Glycine 109, glycine 111, arginine 112, lysine 131, aspartate 143, glycine 144, arginine 194, and arginine 201 together coordinate ATP. Residue aspartate 270 is the Proton acceptor of the active site. Residues asparagine 271 and aspartate 280 each coordinate Mg(2+). Aspartate 280 is a binding site for ATP.

This sequence belongs to the SELO family. Mg(2+) serves as cofactor. It depends on Mn(2+) as a cofactor.

The catalysed reaction is L-seryl-[protein] + ATP = 3-O-(5'-adenylyl)-L-seryl-[protein] + diphosphate. It carries out the reaction L-threonyl-[protein] + ATP = 3-O-(5'-adenylyl)-L-threonyl-[protein] + diphosphate. It catalyses the reaction L-tyrosyl-[protein] + ATP = O-(5'-adenylyl)-L-tyrosyl-[protein] + diphosphate. The enzyme catalyses L-histidyl-[protein] + UTP = N(tele)-(5'-uridylyl)-L-histidyl-[protein] + diphosphate. The catalysed reaction is L-seryl-[protein] + UTP = O-(5'-uridylyl)-L-seryl-[protein] + diphosphate. It carries out the reaction L-tyrosyl-[protein] + UTP = O-(5'-uridylyl)-L-tyrosyl-[protein] + diphosphate. Functionally, nucleotidyltransferase involved in the post-translational modification of proteins. It can catalyze the addition of adenosine monophosphate (AMP) or uridine monophosphate (UMP) to a protein, resulting in modifications known as AMPylation and UMPylation. This chain is Protein nucleotidyltransferase YdiU, found in Burkholderia pseudomallei (strain K96243).